The primary structure comprises 339 residues: Small ribosomal subunit biogenesis GTPase RsgA (339 aa).

The CP-type G domain maps to 111–271 (MRGLLKPVAA…LIDSPGIREF (161 aa)). GTP-binding positions include 159-162 (NKAD) and 213-221 (GQSGVGKSS). The Zn(2+) site is built by C295, C300, H302, and C308.

The protein belongs to the TRAFAC class YlqF/YawG GTPase family. RsgA subfamily. In terms of assembly, monomer. Associates with 30S ribosomal subunit, binds 16S rRNA. It depends on Zn(2+) as a cofactor.

Its subcellular location is the cytoplasm. In terms of biological role, one of several proteins that assist in the late maturation steps of the functional core of the 30S ribosomal subunit. Helps release RbfA from mature subunits. May play a role in the assembly of ribosomal proteins into the subunit. Circularly permuted GTPase that catalyzes slow GTP hydrolysis, GTPase activity is stimulated by the 30S ribosomal subunit. The protein is Small ribosomal subunit biogenesis GTPase RsgA of Pseudomonas aeruginosa (strain LESB58).